The sequence spans 527 residues: Phosphoenolpyruvate carboxykinase (ATP) (527 aa).

Positions 54, 190, and 196 each coordinate substrate. ATP contacts are provided by residues Lys-196, His-215, and 231 to 239 (GLSGTGKTT). Residues Lys-196 and His-215 each contribute to the Mn(2+) site. Asp-252 lines the Mn(2+) pocket. ATP contacts are provided by residues Glu-280, Arg-317, 436–437 (RI), and Thr-442. Position 317 (Arg-317) interacts with substrate.

The protein belongs to the phosphoenolpyruvate carboxykinase (ATP) family. Requires Mn(2+) as cofactor.

The protein localises to the cytoplasm. The catalysed reaction is oxaloacetate + ATP = phosphoenolpyruvate + ADP + CO2. It functions in the pathway carbohydrate biosynthesis; gluconeogenesis. In terms of biological role, involved in the gluconeogenesis. Catalyzes the conversion of oxaloacetate (OAA) to phosphoenolpyruvate (PEP) through direct phosphoryl transfer between the nucleoside triphosphate and OAA. In Oceanobacillus iheyensis (strain DSM 14371 / CIP 107618 / JCM 11309 / KCTC 3954 / HTE831), this protein is Phosphoenolpyruvate carboxykinase (ATP).